The chain runs to 439 residues: Adenylosuccinate synthetase (439 aa).

Residues 25-31 and 53-55 contribute to the GTP site; these read GDEGKGK and GHT. Asp26 functions as the Proton acceptor in the catalytic mechanism. 2 residues coordinate Mg(2+): Asp26 and Gly53. IMP contacts are provided by residues 26 to 29, 51 to 54, Thr146, Arg160, Asn237, Thr252, and Arg316; these read DEGK and NAGH. His54 functions as the Proton donor in the catalytic mechanism. 312–318 contributes to the substrate binding site; sequence VTTGRRR. GTP-binding positions include Arg318, 344 to 346, and 426 to 428; these read KLD and GVG.

The protein belongs to the adenylosuccinate synthetase family. Homodimer. Mg(2+) serves as cofactor.

The protein localises to the cytoplasm. It carries out the reaction IMP + L-aspartate + GTP = N(6)-(1,2-dicarboxyethyl)-AMP + GDP + phosphate + 2 H(+). It participates in purine metabolism; AMP biosynthesis via de novo pathway; AMP from IMP: step 1/2. Plays an important role in the de novo pathway and in the salvage pathway of purine nucleotide biosynthesis. Catalyzes the first committed step in the biosynthesis of AMP from IMP. This Mycosarcoma maydis (Corn smut fungus) protein is Adenylosuccinate synthetase.